The following is a 353-amino-acid chain: Draxin-B (353 aa).

An N-terminal signal peptide occupies residues methionine 1–serine 21. Disordered regions lie at residues glutamate 23–serine 183, threonine 198–valine 222, and valine 246–valine 268. A compositionally biased stretch (basic residues) spans glycine 138–lysine 167. The span at serine 252–lysine 261 shows a compositional bias: basic residues. N-linked (GlcNAc...) asparagine glycosylation is found at asparagine 262 and asparagine 267.

The protein belongs to the draxin family.

It localises to the secreted. Its function is as follows. Chemorepulsive axon guidance protein required for the development of spinal cord and forebrain commissures. Acts as a chemorepulsive guidance protein for commissural axons during development. Able to inhibit or repel neurite outgrowth from dorsal spinal cord. The polypeptide is Draxin-B (draxin-B) (Salmo salar (Atlantic salmon)).